The sequence spans 1649 residues: PHD and RING finger domain-containing protein 1 (1649 aa).

Residues 1–79 (MDDDSLDELV…RSGSEDSEDD (79 aa)) form a disordered region. Ser-5 bears the Phosphoserine mark. Residues 54–79 (TDGEDEGASEEEDLEDRSGSEDSEDD) show a composition bias toward acidic residues. The RING-type; degenerate zinc finger occupies 108–149 (CPICLNAFRDQAVGTPENCAHYFCLDCIVEWSKNANSCPVDR). Residues 183–233 (PTFCEVCGRSDREDRLLLCDGCDAGYHMECLDPPLQEVPVDEWFCPECAAP) form a PHD-type zinc finger. The tract at residues 324 to 398 (VYQRPLTPRT…TRSRIARTLG (75 aa)) is disordered. Phosphothreonine is present on Thr-330. Basic residues predominate over residues 334–353 (PARRKRKTRRRKKVPGRKKT). Low complexity predominate over residues 354-366 (PSGPSAKSKSSAT). The span at 367-382 (RSKKRQHRVKKRRGKK) shows a compositional bias: basic residues. Ser-445 and Ser-455 each carry phosphoserine. Disordered regions lie at residues 534-600 (KRAA…GAPV), 644-871 (SAAS…PKAQ), 888-1240 (FGTE…KAPL), and 1281-1395 (IQLD…PLLR). Residues 568-589 (SPAQGPSGNRPQSTGLSCQGRS) are compositionally biased toward polar residues. Composition is skewed to basic and acidic residues over residues 685–697 (IRRDDGGGRRDAA) and 727–742 (TRAESEASSRVPREPG). Over residues 786-796 (AHSSQLSSPGF) the composition is skewed to polar residues. The segment covering 802–812 (PVDDKEQRKEN) has biased composition (basic and acidic residues). Phosphoserine occurs at positions 814, 845, 846, 864, 867, and 915. Composition is skewed to polar residues over residues 835 to 848 (PTGSDSSAPGSSPE) and 859 to 871 (ITRTISINSPKAQ). At Thr-917 the chain carries Phosphothreonine. A phosphoserine mark is found at Ser-936, Ser-973, and Ser-991. Residues 988-999 (RPPSRSRSTSSS) show a composition bias toward low complexity. Positions 1000–1011 (RSRKKAKRKRVS) are enriched in basic residues. Basic and acidic residues predominate over residues 1012-1030 (REHGRTRSGTRSESRDRSS). Residues 1043 to 1053 (RRQRSKAKSRR) show a composition bias toward basic residues. Residues 1054 to 1063 (SSSDRSSSRE) show a composition bias toward basic and acidic residues. The segment covering 1064–1090 (RAKRKKAKDKSREHRRGPWGHSRRTSR) has biased composition (basic residues). Over residues 1091–1101 (SRSGSPGSSSY) the composition is skewed to low complexity. A compositionally biased stretch (basic residues) spans 1106 to 1118 (SRKKKKRRSASRP). Phosphoserine is present on residues Ser-1124 and Ser-1128. Basic and acidic residues-rich tracts occupy residues 1141–1151 (RSHERPDRKES) and 1181–1198 (REKWPQTRSHSPERKGAV). Ser-1202 and Ser-1229 each carry phosphoserine. Residues 1284–1297 (DDMSSPPSPESTDS) show a composition bias toward low complexity. Residues 1345 to 1356 (HLLRPDAAEKAE) are compositionally biased toward basic and acidic residues. Phosphoserine is present on residues Ser-1359, Ser-1360, and Ser-1371. Residue Thr-1404 is modified to Phosphothreonine. Disordered regions lie at residues 1407–1439 (LQESESSAPAEDRAPRAPLHRPQKPREGAWDME), 1455–1486 (FPSHVLPEPGFPDTDPSQVYSPGLPPAPAQPS), 1526–1556 (TPASEPASQATAASNSEEKTPAPRLAAEKTK), and 1630–1649 (MRRHKKPEAGEEPPTQGAEG). Polar residues predominate over residues 1531–1540 (PASQATAASN). The span at 1541–1556 (SEEKTPAPRLAAEKTK) shows a compositional bias: basic and acidic residues. A coiled-coil region spans residues 1549–1579 (RLAAEKTKKEEYMKKLHMQERAVEEVKLAIK).

Interacts with POLR2A (via the C-terminal domain).

The protein is PHD and RING finger domain-containing protein 1 (PHRF1) of Homo sapiens (Human).